A 234-amino-acid polypeptide reads, in one-letter code: Large ribosomal subunit protein uL1 (234 aa).

The protein belongs to the universal ribosomal protein uL1 family. In terms of assembly, part of the 50S ribosomal subunit.

Its function is as follows. Binds directly to 23S rRNA. The L1 stalk is quite mobile in the ribosome, and is involved in E site tRNA release. Protein L1 is also a translational repressor protein, it controls the translation of the L11 operon by binding to its mRNA. The protein is Large ribosomal subunit protein uL1 of Psychromonas ingrahamii (strain DSM 17664 / CCUG 51855 / 37).